The chain runs to 167 residues: T-cell surface glycoprotein CD3 delta chain (167 aa).

The N-terminal stretch at 1–21 (MEHSRCLSCLILAALLSQVNP) is a signal peptide. Residues 22–100 (RALEVLEAED…NCVELDSATL (79 aa)) are Extracellular-facing. Cysteine 37 and cysteine 73 are oxidised to a cystine. 2 N-linked (GlcNAc...) asparagine glycosylation sites follow: asparagine 38 and asparagine 55. A helical membrane pass occupies residues 101–121 (AGLIITDIIATVLLALGVYCF). At 122 to 167 (AGHETGRFSRAADTQVLMGNDQLYQPLRERNDAQYSRLGDKWARNK) the chain is on the cytoplasmic side. The region spanning 134–162 (DTQVLMGNDQLYQPLRERNDAQYSRLGDK) is the ITAM domain. Phosphotyrosine is present on residues tyrosine 145 and tyrosine 156.

The TCR-CD3 complex is composed of a CD3D/CD3E and a CD3G/CD3E heterodimers that preferentially associate with TCRalpha and TCRbeta, respectively, to form TCRalpha/CD3E/CD3G and TCRbeta/CD3G/CD3E trimers. In turn, the hexamer interacts with CD3Z homodimer to form the TCR-CD3 complex. Alternatively, TCRalpha and TCRbeta can be replaced by TCRgamma and TCRdelta. Interacts with coreceptors CD4 and CD8. In terms of processing, phosphorylated on Tyr residues after T-cell receptor triggering by LCK in association with CD4/CD8. CD3D is mostly present on T-lymphocytes with its TCR-CD3 partners. Present also in fetal NK-cells.

The protein resides in the cell membrane. Part of the TCR-CD3 complex present on T-lymphocyte cell surface that plays an essential role in adaptive immune response. When antigen presenting cells (APCs) activate T-cell receptor (TCR), TCR-mediated signals are transmitted across the cell membrane by the CD3 chains CD3D, CD3E, CD3G and CD3Z. All CD3 chains contain immunoreceptor tyrosine-based activation motifs (ITAMs) in their cytoplasmic domain. Upon TCR engagement, these motifs become phosphorylated by Src family protein tyrosine kinases LCK and FYN, resulting in the activation of downstream signaling pathways. In addition of this role of signal transduction in T-cell activation, CD3D plays an essential role in thymocyte differentiation. Indeed, participates in correct intracellular TCR-CD3 complex assembly and surface expression. In absence of a functional TCR-CD3 complex, thymocytes are unable to differentiate properly. Interacts with CD4 and CD8 and thus serves to establish a functional link between the TCR and coreceptors CD4 and CD8, which is needed for activation and positive selection of CD4 or CD8 T-cells. The chain is T-cell surface glycoprotein CD3 delta chain (CD3D) from Ovis aries (Sheep).